We begin with the raw amino-acid sequence, 221 residues long: ATP-dependent dethiobiotin synthetase BioD (221 aa).

ATP is bound at residue 11 to 16 (DIGKTL). Threonine 15 lines the Mg(2+) pocket. Residue lysine 35 is part of the active site. Threonine 39 is a binding site for substrate. ATP-binding positions include aspartate 44 and 103-106 (EGAG). Residues aspartate 44 and glutamate 103 each coordinate Mg(2+).

This sequence belongs to the dethiobiotin synthetase family. As to quaternary structure, homodimer. It depends on Mg(2+) as a cofactor.

It localises to the cytoplasm. The enzyme catalyses (7R,8S)-7,8-diammoniononanoate + CO2 + ATP = (4R,5S)-dethiobiotin + ADP + phosphate + 3 H(+). It functions in the pathway cofactor biosynthesis; biotin biosynthesis; biotin from 7,8-diaminononanoate: step 1/2. Functionally, catalyzes a mechanistically unusual reaction, the ATP-dependent insertion of CO2 between the N7 and N8 nitrogen atoms of 7,8-diaminopelargonic acid (DAPA, also called 7,8-diammoniononanoate) to form a ureido ring. The chain is ATP-dependent dethiobiotin synthetase BioD from Leptospira borgpetersenii serovar Hardjo-bovis (strain L550).